We begin with the raw amino-acid sequence, 382 residues long: Sphingosine 1-phosphate receptor 1 (382 aa).

Residues 1–46 (MGSTRIPLVKALHSPVSDYVNYDIIVRHYNYTGKLKISADKDNGIK) lie on the Extracellular side of the membrane. Position 10 is an N6-acetyllysine (lysine 10). N-linked (GlcNAc...) asparagine glycosylation is present at asparagine 30. The helical transmembrane segment at 47-68 (LISVVFILICCFIILENIFVLL) threads the bilayer. At 69–82 (TIWKTKKFHRPMYY) the chain is on the cytoplasmic side. Residues 83–104 (FIGNLALSDLLAGVAYTANLLL) traverse the membrane as a helical segment. Residues 105-116 (SGATTYKLTPAQ) are Extracellular-facing. The helical transmembrane segment at 117-138 (WFLREGSMFVALSASVFSLLAI) threads the bilayer. 120–121 (RE) is a binding site for sphing-4-enine 1-phosphate. Topologically, residues 139 to 160 (AIERYITMLKMKLHNGSNRFRS) are cytoplasmic. The chain crosses the membrane as a helical span at residues 161–182 (FLLISACWVISLILGGLPIMGW). The Extracellular portion of the chain corresponds to 183–196 (NCISTLPSCSTVLP). A disulfide bond links cysteine 184 and cysteine 191. Residues 197 to 224 (LYHKHYILFCTTVFTLLLLSIVILYCRI) form a helical membrane-spanning segment. Residues 225–257 (YSLVRTRSRRLTFRKNISKASRSSEKSLALLKT) are Cytoplasmic-facing. Threonine 236 is modified (phosphothreonine; by PKB/AKT1). A helical membrane pass occupies residues 258–278 (VIIVLGVFIACWAPLFILLLL). A sphing-4-enine 1-phosphate-binding site is contributed by 265 to 269 (FIACW). The Extracellular portion of the chain corresponds to 279-289 (DVGCKVKTCDI). An intrachain disulfide couples cysteine 282 to cysteine 287. The helical transmembrane segment at 290–310 (LFRTEYFLVLAVLNSGTNPII) threads the bilayer. Residues 311–382 (YTLSNKEMRR…MSSGNVNSSS (72 aa)) are Cytoplasmic-facing. Cysteine 328 carries the S-palmitoyl cysteine lipid modification. Positions 349–382 (EFSRSKSDNSSHPQKDDGDNPETIMSSGNVNSSS) are disordered. Phosphoserine is present on residues serine 351 and serine 353. Residues 351-366 (SRSKSDNSSHPQKDDG) are compositionally biased toward basic and acidic residues. Positions 371–382 (TIMSSGNVNSSS) are enriched in polar residues.

It belongs to the G-protein coupled receptor 1 family. As to quaternary structure, interacts with GNAI1 and GNAI3. Interacts with CD69; this interaction promotes S1PR1 degradation. In terms of processing, S1P-induced endothelial cell migration requires the PKB/AKT1-mediated phosphorylation of the third intracellular loop at the Thr-236 residue. Post-translationally, palmitoylated by ZDHHC5. Palmitoylation is required for targeting to plasma membrane, enabling G(i) coupling.

The protein localises to the cell membrane. It localises to the endosome. Its subcellular location is the membrane raft. G-protein coupled receptor for the bioactive lysosphingolipid sphingosine 1-phosphate (S1P) that seems to be coupled to the G(i) subclass of heteromeric G proteins. Signaling leads to the activation of RAC1, SRC, PTK2/FAK1 and MAP kinases. Plays an important role in cell migration, probably via its role in the reorganization of the actin cytoskeleton and the formation of lamellipodia in response to stimuli that increase the activity of the sphingosine kinase SPHK1. Required for normal chemotaxis toward sphingosine 1-phosphate. Required for normal embryonic heart development and normal cardiac morphogenesis. Plays an important role in the regulation of sprouting angiogenesis and vascular maturation. Inhibits sprouting angiogenesis to prevent excessive sprouting during blood vessel development. Required for normal egress of mature T-cells from the thymus into the blood stream and into peripheral lymphoid organs. Plays a role in the migration of osteoclast precursor cells, the regulation of bone mineralization and bone homeostasis. Plays a role in responses to oxidized 1-palmitoyl-2-arachidonoyl-sn-glycero-3-phosphocholine by pulmonary endothelial cells and in the protection against ventilator-induced lung injury. The polypeptide is Sphingosine 1-phosphate receptor 1 (S1PR1) (Bos taurus (Bovine)).